The primary structure comprises 1011 residues: DNA-directed RNA polymerase 2, chloroplastic/mitochondrial (1011 aa).

Positions 307–326 (KGDDNEESGGVENETSMKEQ) are disordered. Catalysis depends on residues Asp712, Lys787, and Asp944.

Belongs to the phage and mitochondrial RNA polymerase family. As to quaternary structure, interacts with NIP1 and NIP2.

The protein localises to the plastid. The protein resides in the chloroplast. Its subcellular location is the mitochondrion. The catalysed reaction is RNA(n) + a ribonucleoside 5'-triphosphate = RNA(n+1) + diphosphate. In terms of biological role, DNA-dependent RNA polymerase catalyzes the transcription of DNA into RNA using the four ribonucleoside triphosphates as substrates. This chain is DNA-directed RNA polymerase 2, chloroplastic/mitochondrial (RPOT2), found in Arabidopsis thaliana (Mouse-ear cress).